Reading from the N-terminus, the 292-residue chain is Sulfofructosephosphate aldolase (292 aa).

The active-site Schiff-base intermediate with substrate is lysine 193.

Belongs to the aldolase LacD family. In terms of assembly, homotetramer.

The enzyme catalyses 6-deoxy-6-sulfo-D-fructose 1-phosphate = (2S)-3-sulfolactaldehyde + dihydroxyacetone phosphate. Cleaves 6-deoxy-6-sulfo-D-fructose 1-phosphate (SFP) to form dihydroxyacetone phosphate (DHAP) and 3-sulfolactaldehyde (SLA). Can also catalyze the reverse reaction. This Salmonella typhimurium (strain LT2 / SGSC1412 / ATCC 700720) protein is Sulfofructosephosphate aldolase (yihT).